A 354-amino-acid polypeptide reads, in one-letter code: Inositol-tetrakisphosphate 1-kinase 1 (354 aa).

The segment covering 1-16 (MRVHEEASEDKEREVE) has biased composition (basic and acidic residues). Residues 1–24 (MRVHEEASEDKEREVEEAPDLMPL) form a disordered region. The 1D-myo-inositol 1,3,4-trisphosphate site is built by lysine 53 and lysine 95. Arginine 130 and lysine 180 together coordinate ATP. Residues 140-347 (LNLSNAYGEV…FLLSLVQNKY (208 aa)) enclose the ATP-grasp domain. 1D-myo-inositol 1,3,4-trisphosphate contacts are provided by histidine 191 and lysine 223. ATP-binding positions include 212–223 (QEFVNHGGILFK) and serine 238. Mg(2+)-binding residues include aspartate 303, aspartate 318, and asparagine 320. Asparagine 320 provides a ligand contact to 1D-myo-inositol 1,3,4-trisphosphate.

It belongs to the ITPK1 family. As to quaternary structure, monomer. Requires Mg(2+) as cofactor. Expressed in roots, leaves, flowers, anthers and embryos.

The catalysed reaction is 1D-myo-inositol 3,4,5,6-tetrakisphosphate + ATP = 1D-myo-inositol 1,3,4,5,6-pentakisphosphate + ADP + H(+). It catalyses the reaction 1D-myo-inositol 1,3,4-trisphosphate + ATP = 1D-myo-inositol 1,3,4,5-tetrakisphosphate + ADP + H(+). The enzyme catalyses 1D-myo-inositol 1,3,4-trisphosphate + ATP = 1D-myo-inositol 1,3,4,6-tetrakisphosphate + ADP + H(+). In terms of biological role, kinase that can phosphorylate various inositol polyphosphate such as Ins(3,4,5,6)P4 or Ins(1,3,4)P3 and participates in phytic acid biosynthesis in developing seeds. Phytic acid is the primary storage form of phosphorus in cereal grains and other plant seeds. This chain is Inositol-tetrakisphosphate 1-kinase 1, found in Oryza sativa subsp. japonica (Rice).